Reading from the N-terminus, the 424-residue chain is Light-independent protochlorophyllide reductase subunit N (424 aa).

[4Fe-4S] cluster contacts are provided by Cys-26, Cys-51, and Cys-112.

This sequence belongs to the BchN/ChlN family. In terms of assembly, protochlorophyllide reductase is composed of three subunits; BchL, BchN and BchB. Forms a heterotetramer of two BchB and two BchN subunits. [4Fe-4S] cluster serves as cofactor.

It catalyses the reaction chlorophyllide a + oxidized 2[4Fe-4S]-[ferredoxin] + 2 ADP + 2 phosphate = protochlorophyllide a + reduced 2[4Fe-4S]-[ferredoxin] + 2 ATP + 2 H2O. It functions in the pathway porphyrin-containing compound metabolism; bacteriochlorophyll biosynthesis (light-independent). In terms of biological role, component of the dark-operative protochlorophyllide reductase (DPOR) that uses Mg-ATP and reduced ferredoxin to reduce ring D of protochlorophyllide (Pchlide) to form chlorophyllide a (Chlide). This reaction is light-independent. The NB-protein (BchN-BchB) is the catalytic component of the complex. The sequence is that of Light-independent protochlorophyllide reductase subunit N from Rhodobacter capsulatus (strain ATCC BAA-309 / NBRC 16581 / SB1003).